A 463-amino-acid polypeptide reads, in one-letter code: uncharacterized protein (463 aa).

Positions 9–67 constitute a TRAM domain; that stretch reads VLKKGQRFPLTIKRLGINGEGVGYFKRHVVFVPGALPGEEVVVEVTDVKPRFAEASIRK. [4Fe-4S] cluster-binding residues include cysteine 80, cysteine 86, cysteine 89, and cysteine 169. S-adenosyl-L-methionine-binding residues include glutamine 293, tyrosine 322, aspartate 343, and aspartate 391. Cysteine 418 acts as the Nucleophile in catalysis.

The protein belongs to the class I-like SAM-binding methyltransferase superfamily. RNA M5U methyltransferase family.

This is an uncharacterized protein from Halalkalibacterium halodurans (strain ATCC BAA-125 / DSM 18197 / FERM 7344 / JCM 9153 / C-125) (Bacillus halodurans).